The following is a 210-amino-acid chain: Floral homeotic protein FBP1 (210 aa).

Residues 3 to 57 (RGKIEIKRIENSSNRQVTYSKRRNGILKKAKEISVLCDARVSVIIFASSGKMHEF) form the MADS-box domain. The region spanning 82–173 (HENLDNEINK…QLEIATMNRN (92 aa)) is the K-box domain.

As to expression, petals.

Its subcellular location is the nucleus. Its function is as follows. Probable transcription factor. This is Floral homeotic protein FBP1 (FBP1) from Petunia hybrida (Petunia).